Reading from the N-terminus, the 331-residue chain is D/L-glyceraldehyde reductase (331 aa).

The active-site Proton donor is Tyr51. Position 114 (His114) interacts with substrate. 213–276 contributes to the NADP(+) binding site; it reads SAFGNNTKGL…SVTKARIAEN (64 aa).

The protein belongs to the aldo/keto reductase family.

The enzyme catalyses glycerol + NADP(+) = L-glyceraldehyde + NADPH + H(+). It carries out the reaction glycerol + NADP(+) = D-glyceraldehyde + NADPH + H(+). It participates in carbohydrate acid metabolism. In terms of biological role, mediates the conversion of L-glyceraldehyde to glycerol in D-galacturonate catabolic process. Also able to reduce D-glyceraldehyde. This Hypocrea jecorina (Trichoderma reesei) protein is D/L-glyceraldehyde reductase (gld1).